A 436-amino-acid polypeptide reads, in one-letter code: Bystin (436 aa).

T145 is subject to Phosphothreonine. Residues S148 and S152 each carry the phosphoserine modification.

It belongs to the bystin family.

It is found in the nucleus. The protein resides in the nucleolus. Functionally, required for processing of 20S pre-rRNA precursor and biogenesis of 40S ribosomal subunits. This Drosophila melanogaster (Fruit fly) protein is Bystin (bys).